The following is a 56-amino-acid chain: Preprotein translocase subunit SecG (56 aa).

The Cytoplasmic portion of the chain corresponds to 1-29; the sequence is MAKDKTTLPPTGAGLMRFFDEDTRAIKVS. Residues 30–51 form a helical membrane-spanning segment; it reads PKGVIAIVLVLIAFEVFLHLFG. Topologically, residues 52–56 are extracellular; sequence PSIFG.

It belongs to the SEC61-beta family. As to quaternary structure, component of the protein translocase complex. Heterotrimer consisting of alpha (SecY), beta (SecG) and gamma (SecE) subunits. Can form oligomers of the heterotrimer.

It localises to the cell membrane. Functionally, involved in protein export. The function of the beta subunit is unknown, but it may be involved in stabilization of the trimeric complex. This Thermococcus gammatolerans (strain DSM 15229 / JCM 11827 / EJ3) protein is Preprotein translocase subunit SecG.